Reading from the N-terminus, the 259-residue chain is Beta-glucanase (259 aa).

Residues 1–31 (MVKSKYLVFISVFSLLFGVFVVGFSHQGVKA) form the signal peptide. One can recognise a GH16 domain in the interval 35-255 (RPMGTAFYES…WVRYTPLQNY (221 aa)). The active-site Nucleophile is the Glu-142. The active-site Proton donor is the Glu-146.

This sequence belongs to the glycosyl hydrolase 16 family.

It catalyses the reaction Hydrolysis of (1-&gt;4)-beta-D-glucosidic linkages in beta-D-glucans containing (1-&gt;3)- and (1-&gt;4)-bonds.. Hydrolyzes B-glucans containing mixed beta-1,3 and beta-1,4 linkages. This is Beta-glucanase (bglBB) from Brevibacillus brevis (Bacillus brevis).